The primary structure comprises 116 residues: MNLFATILIIMTTLSLVLALVSFWLPQMNSDTEKLSPYECGFDPLGSARLPFSLRFFLVAVLFPLFDLEIALLLPLPWGDQLNNPMETLFWAMTVLILLTLGLAYEWAQGGLEWAE.

3 helical membrane-spanning segments follow: residues 3–23, 56–76, and 88–108; these read LFATILIIMTTLSLVLALVSF, FFLVAVLFPLFDLEIALLLPL, and TLFWAMTVLILLTLGLAYEWA.

It belongs to the complex I subunit 3 family. In terms of assembly, core subunit of respiratory chain NADH dehydrogenase (Complex I) which is composed of 45 different subunits.

The protein resides in the mitochondrion inner membrane. It carries out the reaction a ubiquinone + NADH + 5 H(+)(in) = a ubiquinol + NAD(+) + 4 H(+)(out). Core subunit of the mitochondrial membrane respiratory chain NADH dehydrogenase (Complex I) which catalyzes electron transfer from NADH through the respiratory chain, using ubiquinone as an electron acceptor. Essential for the catalytic activity of complex I. This Danio rerio (Zebrafish) protein is NADH-ubiquinone oxidoreductase chain 3 (mt-nd3).